A 171-amino-acid polypeptide reads, in one-letter code: uncharacterized protein (171 aa).

This is an uncharacterized protein from Escherichia coli O157:H7.